We begin with the raw amino-acid sequence, 381 residues long: UDP-4-amino-4-deoxy-L-arabinose--oxoglutarate aminotransferase (381 aa).

Position 182 is an N6-(pyridoxal phosphate)lysine (lysine 182).

This sequence belongs to the DegT/DnrJ/EryC1 family. ArnB subfamily. As to quaternary structure, homodimer. Pyridoxal 5'-phosphate is required as a cofactor.

The enzyme catalyses UDP-4-amino-4-deoxy-beta-L-arabinose + 2-oxoglutarate = UDP-beta-L-threo-pentopyranos-4-ulose + L-glutamate. Its pathway is nucleotide-sugar biosynthesis; UDP-4-deoxy-4-formamido-beta-L-arabinose biosynthesis; UDP-4-deoxy-4-formamido-beta-L-arabinose from UDP-alpha-D-glucuronate: step 2/3. It functions in the pathway bacterial outer membrane biogenesis; lipopolysaccharide biosynthesis. Catalyzes the conversion of UDP-4-keto-arabinose (UDP-Ara4O) to UDP-4-amino-4-deoxy-L-arabinose (UDP-L-Ara4N). The modified arabinose is attached to lipid A and is required for resistance to polymyxin and cationic antimicrobial peptides. The polypeptide is UDP-4-amino-4-deoxy-L-arabinose--oxoglutarate aminotransferase (Photorhabdus laumondii subsp. laumondii (strain DSM 15139 / CIP 105565 / TT01) (Photorhabdus luminescens subsp. laumondii)).